The chain runs to 84 residues: U1-theraphotoxin-Hs1a (84 aa).

The N-terminal stretch at 1–22 (MKVTLIAILTCAAVLVLHTTAA) is a signal peptide. A propeptide spanning residues 23–48 (EELEESQLMEVGMPDTELAAVDEERL) is cleaved from the precursor. 3 cysteine pairs are disulfide-bonded: Cys-51–Cys-65, Cys-55–Cys-76, and Cys-70–Cys-81.

Belongs to the neurotoxin 12 (Hwtx-2) family. 02 (Hwtx-2) subfamily. Expressed by the venom gland.

Its subcellular location is the secreted. Blocks neuromuscular transmission. Acts cooperatively to potentiate the activity of huwentoxin-I. Paralyzes locusts and kills mice following intracerebroventricular injection. This chain is U1-theraphotoxin-Hs1a, found in Cyriopagopus schmidti (Chinese bird spider).